The chain runs to 346 residues: N-acetyl-gamma-glutamyl-phosphate reductase (346 aa).

Residue cysteine 149 is part of the active site.

Belongs to the NAGSA dehydrogenase family. Type 1 subfamily.

Its subcellular location is the cytoplasm. The enzyme catalyses N-acetyl-L-glutamate 5-semialdehyde + phosphate + NADP(+) = N-acetyl-L-glutamyl 5-phosphate + NADPH + H(+). It participates in amino-acid biosynthesis; L-arginine biosynthesis; N(2)-acetyl-L-ornithine from L-glutamate: step 3/4. In terms of biological role, catalyzes the NADPH-dependent reduction of N-acetyl-5-glutamyl phosphate to yield N-acetyl-L-glutamate 5-semialdehyde. The chain is N-acetyl-gamma-glutamyl-phosphate reductase from Oceanobacillus iheyensis (strain DSM 14371 / CIP 107618 / JCM 11309 / KCTC 3954 / HTE831).